The primary structure comprises 492 residues: Fibroblast growth factor receptor substrate 3 (492 aa).

Residue G2 is the site of N-myristoyl glycine attachment. In terms of domain architecture, IRS-type PTB spans 13 to 115 (VPDNHPTKFK…QCNSINVMEE (103 aa)). Disordered stretches follow at residues 153–173 (GEGP…RHPS), 338–455 (QLGG…SDSY), and 467–492 (SNLQ…DLPL).

In terms of assembly, binds NTRK1. Binds FGFR1, NGFR, GRB2, PTPN11 and ERK2. Post-translationally, phosphorylated by ULK2 in vitro. Phosphorylated on tyrosine residues upon stimulation by BFGF or NGFB.

Its subcellular location is the membrane. Adapter protein that links FGF and NGF receptors to downstream signaling pathways. Involved in the activation of MAP kinases. Down-regulates ERK2 signaling by interfering with the phosphorylation and nuclear translocation of ERK2. This chain is Fibroblast growth factor receptor substrate 3 (FRS3), found in Homo sapiens (Human).